A 481-amino-acid chain; its full sequence is Pentatricopeptide repeat-containing protein 8, mitochondrial (481 aa).

The N-terminal 55 residues, 1 to 55 (MQGFGSQIFRKLLRSSNAKVSDALLQNTRTLFTAPPLHSGLQTSFTAETQQHVRQ), are a transit peptide targeting the mitochondrion. PPR repeat units follow at residues 137–172 (SARFWRIMLQSYIDLNLFDKASLIADMSLSHMEFLP) and 365–399 (SISTANTLFSIASRLKDVKWLSAGFDMIDKYGLKP).

Its subcellular location is the mitochondrion. In terms of biological role, mitochondrial RNA-binding protein involved in mitochondrial translation. The cox1 mRNA is one target but it is not clear if ppr8 has a single or multiple targets. This Schizosaccharomyces pombe (strain 972 / ATCC 24843) (Fission yeast) protein is Pentatricopeptide repeat-containing protein 8, mitochondrial (ppr8).